We begin with the raw amino-acid sequence, 140 residues long: ATP synthase epsilon chain (140 aa).

Belongs to the ATPase epsilon chain family. F-type ATPases have 2 components, CF(1) - the catalytic core - and CF(0) - the membrane proton channel. CF(1) has five subunits: alpha(3), beta(3), gamma(1), delta(1), epsilon(1). CF(0) has three main subunits: a, b and c.

It localises to the cell membrane. Its function is as follows. Produces ATP from ADP in the presence of a proton gradient across the membrane. The sequence is that of ATP synthase epsilon chain from Baumannia cicadellinicola subsp. Homalodisca coagulata.